Consider the following 582-residue polypeptide: Formate--tetrahydrofolate ligase (582 aa).

65-72 serves as a coordination point for ATP; that stretch reads TPLGEGKT.

Belongs to the formate--tetrahydrofolate ligase family.

The enzyme catalyses (6S)-5,6,7,8-tetrahydrofolate + formate + ATP = (6R)-10-formyltetrahydrofolate + ADP + phosphate. The protein operates within one-carbon metabolism; tetrahydrofolate interconversion. This chain is Formate--tetrahydrofolate ligase, found in Vibrio parahaemolyticus serotype O3:K6 (strain RIMD 2210633).